The sequence spans 223 residues: Ribose-5-phosphate isomerase A (223 aa).

Substrate contacts are provided by residues 32 to 35 (TGST), 85 to 88 (DGAD), and 98 to 101 (KGGG). The active-site Proton acceptor is E107. K125 serves as a coordination point for substrate.

It belongs to the ribose 5-phosphate isomerase family. As to quaternary structure, homodimer.

The enzyme catalyses aldehydo-D-ribose 5-phosphate = D-ribulose 5-phosphate. The protein operates within carbohydrate degradation; pentose phosphate pathway; D-ribose 5-phosphate from D-ribulose 5-phosphate (non-oxidative stage): step 1/1. Its function is as follows. Catalyzes the reversible conversion of ribose-5-phosphate to ribulose 5-phosphate. The chain is Ribose-5-phosphate isomerase A from Pseudomonas paraeruginosa (strain DSM 24068 / PA7) (Pseudomonas aeruginosa (strain PA7)).